The following is a 173-amino-acid chain: Large ribosomal subunit protein uL10 (173 aa).

The protein belongs to the universal ribosomal protein uL10 family. Part of the ribosomal stalk of the 50S ribosomal subunit. The N-terminus interacts with L11 and the large rRNA to form the base of the stalk. The C-terminus forms an elongated spine to which L12 dimers bind in a sequential fashion forming a multimeric L10(L12)X complex.

In terms of biological role, forms part of the ribosomal stalk, playing a central role in the interaction of the ribosome with GTP-bound translation factors. This chain is Large ribosomal subunit protein uL10, found in Maridesulfovibrio salexigens (strain ATCC 14822 / DSM 2638 / NCIMB 8403 / VKM B-1763) (Desulfovibrio salexigens).